The following is a 425-amino-acid chain: Serine hydroxymethyltransferase (425 aa).

(6S)-5,6,7,8-tetrahydrofolate contacts are provided by residues leucine 120 and 124–126 (GHL). Lysine 229 is modified (N6-(pyridoxal phosphate)lysine). 353-355 (SPF) lines the (6S)-5,6,7,8-tetrahydrofolate pocket.

It belongs to the SHMT family. Homodimer. Pyridoxal 5'-phosphate is required as a cofactor.

The protein localises to the cytoplasm. It carries out the reaction (6R)-5,10-methylene-5,6,7,8-tetrahydrofolate + glycine + H2O = (6S)-5,6,7,8-tetrahydrofolate + L-serine. The protein operates within one-carbon metabolism; tetrahydrofolate interconversion. It functions in the pathway amino-acid biosynthesis; glycine biosynthesis; glycine from L-serine: step 1/1. Functionally, catalyzes the reversible interconversion of serine and glycine with tetrahydrofolate (THF) serving as the one-carbon carrier. This reaction serves as the major source of one-carbon groups required for the biosynthesis of purines, thymidylate, methionine, and other important biomolecules. Also exhibits THF-independent aldolase activity toward beta-hydroxyamino acids, producing glycine and aldehydes, via a retro-aldol mechanism. This Thermosynechococcus vestitus (strain NIES-2133 / IAM M-273 / BP-1) protein is Serine hydroxymethyltransferase.